A 288-amino-acid chain; its full sequence is Protease HtpX homolog (288 aa).

The next 2 membrane-spanning stretches (helical) occupy residues Thr-7–Gly-27 and Gln-29–Ser-49. Residue His-131 coordinates Zn(2+). Glu-132 is a catalytic residue. His-135 is a binding site for Zn(2+). The next 2 membrane-spanning stretches (helical) occupy residues Ile-141–Ala-161 and Ile-177–Ile-197. Glu-202 contacts Zn(2+).

It belongs to the peptidase M48B family. Zn(2+) is required as a cofactor.

Its subcellular location is the cell inner membrane. The chain is Protease HtpX homolog from Polynucleobacter necessarius subsp. necessarius (strain STIR1).